Reading from the N-terminus, the 458-residue chain is Protein adenylyltransferase FICD (458 aa).

The Cytoplasmic segment spans residues Met-1–Arg-23. A helical; Signal-anchor for type II membrane protein membrane pass occupies residues Phe-24–Leu-44. The Lumenal portion of the chain corresponds to Gly-45 to Pro-458. Ser-79 is modified (O-AMP-serine; by autocatalysis). O-AMP-threonine; by autocatalysis is present on Thr-80. TPR repeat units follow at residues Ala-106 to Phe-139 and Val-140 to His-173. The residue at position 183 (Thr-183) is an O-AMP-threonine; by autocatalysis. The Inhibitory (S/T)XXXE(G/N) motif motif lies at Thr-230–Gly-235. Glu-234 serves as a coordination point for ATP. Asn-275 carries N-linked (GlcNAc...) asparagine glycosylation. Positions Val-285–Lys-420 constitute a Fido domain. Val-316–His-319 contacts ATP. Residue His-363 is part of the active site. Residues Asp-367–Arg-374, Tyr-399–Tyr-400, and Asn-407 contribute to the ATP site. Asn-446 carries an N-linked (GlcNAc...) asparagine glycan.

It belongs to the fic family. Homodimer. Interacts with HD. Requires Mg(2+) as cofactor. It depends on Mn(2+) as a cofactor. Post-translationally, auto-AMPylated in vitro; it is unclear whether auto-AMPylation is relevant in vivo. In terms of processing, N-glycosylated; predominantly glycosylated at Asn-275. As to expression, ubiquitous.

The protein localises to the endoplasmic reticulum membrane. It carries out the reaction L-tyrosyl-[protein] + ATP = O-(5'-adenylyl)-L-tyrosyl-[protein] + diphosphate. The catalysed reaction is 3-O-(5'-adenylyl)-L-threonyl-[protein] + H2O = L-threonyl-[protein] + AMP + H(+). It catalyses the reaction L-threonyl-[protein] + ATP = 3-O-(5'-adenylyl)-L-threonyl-[protein] + diphosphate. The side chain of Glu-234 determines which of the two opposing activities (AMPylase or de-AMPylase) will take place. In response to endoplasmic reticulum stress, mediates de-AMPylase activity. Adenylyltransferase activity is inhibited by the inhibitory helix present at the N-terminus: Glu-234 binds ATP and competes with ATP-binding at Arg-374, thereby preventing adenylyltransferase activity. In unstressed cells, disengagement of Glu-234 promotes adenylyltransferase activity. Activation dissociates ATP-binding from Glu-234, allowing ordered binding of the entire ATP moiety with the alpha-phosphate in an orientation that is productive for accepting an incoming target hydroxyl side chain. Functionally, protein that can both mediate the addition of adenosine 5'-monophosphate (AMP) to specific residues of target proteins (AMPylation), and the removal of the same modification from target proteins (de-AMPylation), depending on the context. The side chain of Glu-231 determines which of the two opposing activities (AMPylase or de-AMPylase) will take place. Acts as a key regulator of the ERN1/IRE1-mediated unfolded protein response (UPR) by mediating AMPylation or de-AMPylation of HSPA5/BiP. In unstressed cells, acts as an adenylyltransferase by mediating AMPylation of HSPA5/BiP at 'Thr-518', thereby inactivating it. In response to endoplasmic reticulum stress, acts as a phosphodiesterase by mediating removal of ATP (de-AMPylation) from HSPA5/BiP at 'Thr-518', leading to restore HSPA5/BiP activity. Although it is able to AMPylate RhoA, Rac and Cdc42 Rho GTPases in vitro, Rho GTPases do not constitute physiological substrates. The sequence is that of Protein adenylyltransferase FICD from Homo sapiens (Human).